Consider the following 149-residue polypeptide: Protein E6 (149 aa).

2 zinc fingers span residues 30 to 66 and 103 to 139; these read CVEC…CKVC and CIIC…CAVC. The PDZ-binding domain signature appears at 147-149; the sequence is TQV.

The protein belongs to the papillomaviridae E6 protein family. Forms homodimers. Interacts with ubiquitin-protein ligase UBE3A/E6-AP and thus forms a complex with human TP53. Interacts with human NFX1 and MAGI3. Interacts with human IRF3; this interaction inhibits the establishment of antiviral state. Interacts with human TYK2; this interaction inhibits JAK-STAT activation by interferon alpha. Interacts with host DLG1; this interaction leads to the proteasomal degradation of DLG1.

Its subcellular location is the host cytoplasm. It localises to the host nucleus. Its function is as follows. Plays a major role in the induction and maintenance of cellular transformation. Acts mainly as an oncoprotein by stimulating the destruction of many host cell key regulatory proteins. E6 associates with host UBE3A/E6-AP ubiquitin-protein ligase, and inactivates tumor suppressors TP53 and TP73 by targeting them to the 26S proteasome for degradation. In turn, DNA damage and chromosomal instabilities increase and lead to cell proliferation and cancer development. The complex E6/E6AP targets several other substrates to degradation via the proteasome including host DLG1 or NFX1, a repressor of human telomerase reverse transcriptase (hTERT). The resulting increased expression of hTERT prevents the shortening of telomere length leading to cell immortalization. Other cellular targets including BAK1, Fas-associated death domain-containing protein (FADD) and procaspase 8, are degraded by E6/E6AP causing inhibition of apoptosis. E6 also inhibits immune response by interacting with host IRF3 and TYK2. These interactions prevent IRF3 transcriptional activities and inhibit TYK2-mediated JAK-STAT activation by interferon alpha resulting in inhibition of the interferon signaling pathway. The protein is Protein E6 of Human papillomavirus 58.